The primary structure comprises 224 residues: N-(5'-phosphoribosyl)anthranilate isomerase (224 aa).

The protein belongs to the TrpF family.

It catalyses the reaction N-(5-phospho-beta-D-ribosyl)anthranilate = 1-(2-carboxyphenylamino)-1-deoxy-D-ribulose 5-phosphate. It participates in amino-acid biosynthesis; L-tryptophan biosynthesis; L-tryptophan from chorismate: step 3/5. This is N-(5'-phosphoribosyl)anthranilate isomerase from Allorhizobium ampelinum (strain ATCC BAA-846 / DSM 112012 / S4) (Agrobacterium vitis (strain S4)).